A 331-amino-acid polypeptide reads, in one-letter code: Phosphate acyltransferase (331 aa).

Belongs to the PlsX family. Homodimer. Probably interacts with PlsY.

It localises to the cytoplasm. The enzyme catalyses a fatty acyl-[ACP] + phosphate = an acyl phosphate + holo-[ACP]. Its pathway is lipid metabolism; phospholipid metabolism. Its function is as follows. Catalyzes the reversible formation of acyl-phosphate (acyl-PO(4)) from acyl-[acyl-carrier-protein] (acyl-ACP). This enzyme utilizes acyl-ACP as fatty acyl donor, but not acyl-CoA. The sequence is that of Phosphate acyltransferase from Ureaplasma parvum serovar 3 (strain ATCC 27815 / 27 / NCTC 11736).